The following is a 557-amino-acid chain: MESERSKRMGNACIPLKRIAYFLCLLSALLLTEGKKPAKPKCPAVCTCTKDNALCENARSIPRTVPPDVISLSFVRSGFTEISEGSFLFTPSLQLLLFTSNSFDVISDDAFIGLPHLEYLFIENNNIKSISRHTFRGLKSLIHLSLANNNLQTLPKDIFKGLDSLTNVDLRGNSFNCDCKLKWLVEWLGHTNATVEDIYCEGPPEYKKRKINSLSSKDFDCIITEFAKSQDLPYQSLSIDTFSYLNDEYVVIAQPFTGKCIFLEWDHVEKTFRNYDNITGTSTVVCKPIVIETQLYVIVAQLFGGSHIYKRDSFANKFIKIQDIEILKIRKPNDIETFKIENNWYFVVADSSKAGFTTIYKWNGNGFYSHQSLHAWYRDTDVEYLEIVRTPQTLRTPHLILSSSSQRPVIYQWNKATQLFTNQTDIPNMEDVYAVKHFSVKGDVYICLTRFIGDSKVMKWGGSSFQDIQRMPSRGSMVFQPLQINNYQYAILGSDYSFTQVYNWDAEKAKFVKFQELNVQAPRSFTHVSINKRNFLFASSFKGNTQIYKHVIVDLSA.

Positions 1-34 are cleaved as a signal peptide; that stretch reads MESERSKRMGNACIPLKRIAYFLCLLSALLLTEG. The 38-residue stretch at 35-72 folds into the LRRNT domain; that stretch reads KKPAKPKCPAVCTCTKDNALCENARSIPRTVPPDVISL. LRR repeat units lie at residues 92-113, 116-137, and 140-161; these read SLQLLLFTSNSFDVISDDAFIG, HLEYLFIENNNIKSISRHTFRG, and SLIHLSLANNNLQTLPKDIFKG. Residues 173 to 223 form the LRRCT domain; it reads NSFNCDCKLKWLVEWLGHTNATVEDIYCEGPPEYKKRKINSLSSKDFDCII. Residue asparagine 192 is glycosylated (N-linked (GlcNAc...) asparagine). 7 EAR repeats span residues 225–267, 271–313, 317–364, 366–415, 419–462, 464–506, and 510–552; these read EFAK…EWDH, TFRN…KRDS, KFIK…KWNG, GFYS…QWNK, LFTN…KWGG, SFQD…NWDA, and KFVK…KHVI. A glycan (N-linked (GlcNAc...) asparagine) is linked at asparagine 277. Asparagine 422 carries N-linked (GlcNAc...) asparagine glycosylation.

As to quaternary structure, oligomer. Interacts with KCNA1 within a complex containing KCNA1, KCNA4 and KCNAB1. Part of a complex containing ADAM22, DLG4/PSD95 and CACNG2/Stargazin. Can bind to ADAM11 and ADAM23. Post-translationally, glycosylated. As to expression, predominantly expressed in neural tissues, especially in brain. Expression is reduced in low-grade brain tumors and significantly reduced or absent in malignant gliomas. Expressed in the occipital cortex and hippocampus; higher amounts are observed in the parietal and frontal cortices, putamen, and, particularly, in the temporal neocortex, where it is between 3 and 5 times more abundant than in the hippocampus (at protein level). Expression is absent in the cerebellum. In terms of tissue distribution, abundantly expressed in the occipital cortex and weakly expressed in the hippocampus (at protein level).

It is found in the secreted. The protein resides in the synapse. It localises to the cytoplasm. The protein localises to the golgi apparatus. Its subcellular location is the endoplasmic reticulum. In terms of biological role, regulates voltage-gated potassium channels assembled from KCNA1, KCNA4 and KCNAB1. It slows down channel inactivation by precluding channel closure mediated by the KCNAB1 subunit. Ligand for ADAM22 that positively regulates synaptic transmission mediated by AMPA-type glutamate receptors. Plays a role in suppressing the production of MMP1/3 through the phosphatidylinositol 3-kinase/ERK pathway. May play a role in the control of neuroblastoma cell survival. This is Leucine-rich glioma-inactivated protein 1 (LGI1) from Homo sapiens (Human).